The sequence spans 90 residues: PqqA binding protein 2 (90 aa).

It belongs to the PqqD family. In terms of assembly, monomer. Interacts with PqqE.

The protein operates within cofactor biosynthesis; pyrroloquinoline quinone biosynthesis. Its function is as follows. Functions as a PqqA binding protein and presents PqqA to PqqE, in the pyrroloquinoline quinone (PQQ) biosynthetic pathway. This is PqqA binding protein 2 (pqqD2) from Pseudomonas putida (strain ATCC 47054 / DSM 6125 / CFBP 8728 / NCIMB 11950 / KT2440).